The chain runs to 230 residues: 2,3-bisphosphoglycerate-dependent phosphoglycerate mutase (230 aa).

Substrate is bound by residues 8–15, 21–22, arginine 60, 87–90, lysine 98, 114–115, and 183–184; these read RHGQSEWN, TG, ERHY, RR, and GN. Catalysis depends on histidine 9, which acts as the Tele-phosphohistidine intermediate. Glutamate 87 (proton donor/acceptor) is an active-site residue.

This sequence belongs to the phosphoglycerate mutase family. BPG-dependent PGAM subfamily.

It catalyses the reaction (2R)-2-phosphoglycerate = (2R)-3-phosphoglycerate. The protein operates within carbohydrate degradation; glycolysis; pyruvate from D-glyceraldehyde 3-phosphate: step 3/5. Its function is as follows. Catalyzes the interconversion of 2-phosphoglycerate and 3-phosphoglycerate. The protein is 2,3-bisphosphoglycerate-dependent phosphoglycerate mutase of Lactobacillus acidophilus (strain ATCC 700396 / NCK56 / N2 / NCFM).